The following is a 101-amino-acid chain: MAKLSLIERENKRAKTVEKYAVKRAELKAIIADQSRSDEERYEARLKLQALPRNASPIRQRNRCSLTGRPRGTFRKFGLARSKIREIAFRGEIPGLTKASW.

The protein belongs to the universal ribosomal protein uS14 family. In terms of assembly, part of the 30S ribosomal subunit. Contacts proteins S3 and S10.

Functionally, binds 16S rRNA, required for the assembly of 30S particles and may also be responsible for determining the conformation of the 16S rRNA at the A site. This chain is Small ribosomal subunit protein uS14, found in Polynucleobacter asymbioticus (strain DSM 18221 / CIP 109841 / QLW-P1DMWA-1) (Polynucleobacter necessarius subsp. asymbioticus).